A 250-amino-acid polypeptide reads, in one-letter code: Archaeal flagellar motor scaffold protein FlaX (250 aa).

The Extracellular segment spans residues 1-9 (MAIQDLLQS). A helical transmembrane segment spans residues 10–30 (SLFIILIGVGIPIAAFLEILF). Residues 31–250 (RVILPKTKRV…MILEGGGVNG (220 aa)) are Cytoplasmic-facing. A compositionally biased stretch (polar residues) spans 42–61 (TQQSPQNISQEQRFPTQQKP). Residues 42 to 72 (TQQSPQNISQEQRFPTQQKPANDETSKYSSD) form a disordered region. Residues 62–72 (ANDETSKYSSD) show a composition bias toward basic and acidic residues.

As to quaternary structure, the S.acidocaldarius archaellum assembly machinery and its filament consist of seven proteins (FlaB, FlaF, FlaG, FlaH, FlaI, FlaJ and FlaX). FlaX assembles into ring-shaped oligomers. Interacts directly with FlaH and the motor ATPase FlaI.

Its subcellular location is the archaeal flagellum. It is found in the cell membrane. With respect to regulation, the presence of the flagellar core components FlaH, FlaI and FlaJ seems to be crucial for the stability of FlaX. Its function is as follows. Component of the archaellum. FlaX, FlaH and FlaI form the core cytoplasmic motor complex of the crenarchaeal archaellum. FlaX forms a ring that may act as a membrane-bound cytoplasmic scaffold that guides the assembly of the archaellum motor complex. Is essential for archaellum assembly. This is Archaeal flagellar motor scaffold protein FlaX from Sulfolobus acidocaldarius (strain ATCC 33909 / DSM 639 / JCM 8929 / NBRC 15157 / NCIMB 11770).